A 58-amino-acid chain; its full sequence is Small ribosomal subunit protein bS21 (58 aa).

Over residues 32 to 42 the composition is skewed to basic and acidic residues; the sequence is VRKREHYEKPS. The segment at 32-58 is disordered; it reads VRKREHYEKPSVKKKKKSEAARKRKFK. Basic residues predominate over residues 43–58; the sequence is VKKKKKSEAARKRKFK.

The protein belongs to the bacterial ribosomal protein bS21 family.

In Clostridium botulinum (strain Okra / Type B1), this protein is Small ribosomal subunit protein bS21.